Reading from the N-terminus, the 774-residue chain is Shugoshin (774 aa).

The stretch at 41–105 forms a coiled coil; that stretch reads SLRIRGLENE…AELSSLLASL (65 aa). Disordered stretches follow at residues 106-151, 205-661, and 676-774; these read GEPP…QEGR, SPSP…DAQL, and CASP…SMML. The segment covering 109–120 has biased composition (basic and acidic residues); it reads PSKRRLSEERRY. Positions 214 to 224 are enriched in acidic residues; sequence AEETETTEQVE. Polar residues predominate over residues 297–318; it reads GDNQNEPNKATKLQQGKENGNE. Positions 382–398 are enriched in basic and acidic residues; the sequence is KGKEKVDLPAPDKKSAV. Positions 399–409 are enriched in polar residues; that stretch reads EETQGNSTSAF. 2 stretches are compositionally biased toward basic and acidic residues: residues 482-495 and 549-558; these read NLRD…KELF and FEKEKEKEPQ. 2 stretches are compositionally biased toward polar residues: residues 595–604 and 640–651; these read PSVQEQSTLN and QSMSRSVPTIPT. Low complexity predominate over residues 706–722; that stretch reads ASSAASTETTATASAKP. Residues 743–754 are compositionally biased toward acidic residues; that stretch reads LAQEEEDEEDVG. Residues 765 to 774 are compositionally biased toward basic residues; the sequence is RASRRRSMML.

This sequence belongs to the shugoshin family.

It localises to the nucleus. The protein localises to the chromosome. It is found in the centromere. Its function is as follows. Plays a central role in chromosome cohesion during cell division by preventing premature dissociation of cohesin complex from centromeres after prophase, when most of cohesin complex dissociates from chromosomes arms. In Neurospora crassa (strain ATCC 24698 / 74-OR23-1A / CBS 708.71 / DSM 1257 / FGSC 987), this protein is Shugoshin (sgo-1).